The primary structure comprises 1659 residues: Vitellogenin (1659 aa).

The N-terminal stretch at 1–15 (MRAVVLALTLALVAS) is a signal peptide. One can recognise a Vitellogenin domain in the interval 24–662 (FAASKTYVYK…DAATLFPRTV (639 aa)). N-linked (GlcNAc...) asparagine glycosylation is present at Asn1089. Low complexity-rich tracts occupy residues 1090–1111 (GTRA…SSSR) and 1119–1129 (SSSSSSSSSSR). The segment at 1090–1163 (GTRASSSSSS…SQSTSNVISR (74 aa)) is disordered. Positions 1389 to 1565 (VKCSMVRDTL…SWVLPSDSCR (177 aa)) constitute a VWFD domain. 2 cysteine pairs are disulfide-bonded: Cys1391/Cys1528 and Cys1414/Cys1564. N-linked (GlcNAc...) asparagine glycosylation occurs at Asn1627.

In terms of processing, phosvitin, an egg yolk storage protein, is one of the most highly phosphorylated (10%) proteins in nature. In terms of tissue distribution, produced by the liver, secreted into the blood and then sequestered by receptor mediated endocytosis into growing oocytes, where it is generally cleaved, giving rise to the respective yolk components lipovitellin-I, phosvitin, lipovitellin-II.

In terms of biological role, precursor of the major egg-yolk proteins that are sources of nutrients during early development of oviparous organisms. The polypeptide is Vitellogenin (vtg1) (Oncorhynchus mykiss (Rainbow trout)).